A 67-amino-acid chain; its full sequence is MKKGIHPNYVPCKVTCVTSGKEFEVLSTKPELRIDISSFCHPFYTGSDKVVDTAGRVEKFKQKYNMK.

Belongs to the bacterial ribosomal protein bL31 family. Type A subfamily. In terms of assembly, part of the 50S ribosomal subunit.

Binds the 23S rRNA. The protein is Large ribosomal subunit protein bL31 of Wolinella succinogenes (strain ATCC 29543 / DSM 1740 / CCUG 13145 / JCM 31913 / LMG 7466 / NCTC 11488 / FDC 602W) (Vibrio succinogenes).